A 146-amino-acid chain; its full sequence is 3-hydroxyacyl-[acyl-carrier-protein] dehydratase FabZ (146 aa).

His49 is a catalytic residue.

It belongs to the thioester dehydratase family. FabZ subfamily.

Its subcellular location is the cytoplasm. The catalysed reaction is a (3R)-hydroxyacyl-[ACP] = a (2E)-enoyl-[ACP] + H2O. In terms of biological role, involved in unsaturated fatty acids biosynthesis. Catalyzes the dehydration of short chain beta-hydroxyacyl-ACPs and long chain saturated and unsaturated beta-hydroxyacyl-ACPs. This is 3-hydroxyacyl-[acyl-carrier-protein] dehydratase FabZ from Psychrobacter arcticus (strain DSM 17307 / VKM B-2377 / 273-4).